A 746-amino-acid chain; its full sequence is MEHTYQYSWIIPFIPLPVPILLGVGLLLFPTATKNLRRMWTFLSIFLLSIVMIFSLYLSIQQIFLSCIHQNVWSWTINNEFSFEFGYFIDPLTSIMSILITTVGILVLIYSDNYMSHDQGYLRFFAYMGFFNTSMLGLVTSSNLIQVYFFWELVGMCSYLLIGFWFTRPIAANACQKAFVTNRVGDFGLLLGILGLYWITGSFEFQDLFEIFKNLILNNRVNLLFLTLCAFLLFVGPIAKSAQFPLHVWLPDAMEGPTPISALIHAATMVAAGIFLVARLLPLFIVIPSIMYIISLIGIITVLLGATLALAQKDIKRGLAYSTMSQLGYMMLALGMGSYRSALFHLITHAYSKALLFLGSGSIIHSMEAIVGYSPDKSQNMILMGGLTKHVPITKTAFLIGTLSLCGIPPLACFWSKDEILNDSLLFSPIFAIIACSTAGLTAFYMFRIYLLTFEGHLNTFFLNYSGKKSSSFYSLSLWGKEEEKKLNKNFGLVPLLTMNNTKRASFFCNKTYKISNNVRNQIFITVENFGLNTKTFYYPHESDNTILFPMLILLLFTLFIGAIGIPFNQEGIDFDILSKLFTPSINLLHKNSQNFVDWYEFLRNATFSVSIAFFGIFIAYCLYKPFYSSLLNLTLLNSFQKMNSKRIRWEKLINFVYNWSYNRGYIDAFFKTSLIESIRRLAKQTNFFDKRIIDGITNGVGITSFFVGEVTKYIGGSRISSYLFLYLSYVLIFLMILLFFYFEKF.

16 helical membrane passes run 9 to 29, 40 to 60, 89 to 109, 125 to 145, 147 to 167, 185 to 205, 221 to 241, 258 to 278, 280 to 300, 327 to 347, 354 to 374, 396 to 416, 425 to 445, 547 to 567, 608 to 628, and 723 to 743; these read WIIP…LLLF, WTFL…YLSI, IDPL…LVLI, FAYM…SNLI, VYFF…FWFT, GDFG…SFEF, VNLL…IAKS, TPIS…FLVA, LLPL…IGII, LGYM…FHLI, ALLF…VGYS, TAFL…CFWS, LLFS…TAFY, ILFP…IGIP, FSVS…KPFY, and YLFL…FFYF.

This sequence belongs to the complex I subunit 5 family. As to quaternary structure, NDH is composed of at least 16 different subunits, 5 of which are encoded in the nucleus.

The protein resides in the plastid. It localises to the chloroplast thylakoid membrane. The enzyme catalyses a plastoquinone + NADH + (n+1) H(+)(in) = a plastoquinol + NAD(+) + n H(+)(out). It carries out the reaction a plastoquinone + NADPH + (n+1) H(+)(in) = a plastoquinol + NADP(+) + n H(+)(out). Its function is as follows. NDH shuttles electrons from NAD(P)H:plastoquinone, via FMN and iron-sulfur (Fe-S) centers, to quinones in the photosynthetic chain and possibly in a chloroplast respiratory chain. The immediate electron acceptor for the enzyme in this species is believed to be plastoquinone. Couples the redox reaction to proton translocation, and thus conserves the redox energy in a proton gradient. The sequence is that of NAD(P)H-quinone oxidoreductase subunit 5, chloroplastic (ndhF) from Olimarabidopsis pumila (Dwarf rocket).